We begin with the raw amino-acid sequence, 252 residues long: Trans-aconitate 2-methyltransferase (252 aa).

This sequence belongs to the methyltransferase superfamily. Tam family.

Its subcellular location is the cytoplasm. It carries out the reaction trans-aconitate + S-adenosyl-L-methionine = (E)-3-(methoxycarbonyl)pent-2-enedioate + S-adenosyl-L-homocysteine. Functionally, catalyzes the S-adenosylmethionine monomethyl esterification of trans-aconitate. This is Trans-aconitate 2-methyltransferase from Escherichia coli (strain ATCC 8739 / DSM 1576 / NBRC 3972 / NCIMB 8545 / WDCM 00012 / Crooks).